Consider the following 35-residue polypeptide: Thaumatin-like protein 6 (35 aa).

It belongs to the thaumatin family.

This Glebionis coronaria (Crown daisy) protein is Thaumatin-like protein 6.